A 263-amino-acid polypeptide reads, in one-letter code: Neurogenin-2 (263 aa).

Residues 20-76 are disordered; the sequence is LGSASPASATLTPMSSSADEEEDEELRRPGSARGQRGAEAEQGVQGSPASGAGGCRP. Residues 24–36 show a composition bias toward polar residues; sequence SPASATLTPMSSS. One can recognise a bHLH domain in the interval 112–164; it reads TRRLKANNRERNRMHNLNAALDALREVLPTFPEDAKLTKIETLRFAHNYIWAL. Over residues 197 to 231 the composition is skewed to low complexity; it reads LGASGDSPSPPSSWSCTNSPASSSNSTSPYSCTLS. Positions 197-253 are disordered; sequence LGASGDSPSPPSSWSCTNSPASSSNSTSPYSCTLSPASPGSDVDYWQPPPPEKHRYA.

As to quaternary structure, efficient DNA binding requires dimerization with another bHLH protein.

The protein localises to the nucleus. Its function is as follows. Transcriptional regulator. Involved in neuronal differentiation. Activates transcription by binding to the E box (5'-CANNTG-3'). The polypeptide is Neurogenin-2 (Neurog2) (Mus musculus (Mouse)).